The chain runs to 145 residues: 3-hydroxyacyl-[acyl-carrier-protein] dehydratase FabZ (145 aa).

Histidine 48 is a catalytic residue.

It belongs to the thioester dehydratase family. FabZ subfamily.

It localises to the cytoplasm. It catalyses the reaction a (3R)-hydroxyacyl-[ACP] = a (2E)-enoyl-[ACP] + H2O. Its function is as follows. Involved in unsaturated fatty acids biosynthesis. Catalyzes the dehydration of short chain beta-hydroxyacyl-ACPs and long chain saturated and unsaturated beta-hydroxyacyl-ACPs. The polypeptide is 3-hydroxyacyl-[acyl-carrier-protein] dehydratase FabZ (Marinobacter nauticus (strain ATCC 700491 / DSM 11845 / VT8) (Marinobacter aquaeolei)).